We begin with the raw amino-acid sequence, 478 residues long: Putative UDP-glucose flavonoid 3-O-glucosyltransferase 3 (478 aa).

Belongs to the UDP-glycosyltransferase family.

The sequence is that of Putative UDP-glucose flavonoid 3-O-glucosyltransferase 3 from Fragaria ananassa (Strawberry).